Reading from the N-terminus, the 260-residue chain is ATP synthase subunit a (260 aa).

7 helical membrane-spanning segments follow: residues phenylalanine 29–isoleucine 49, phenylalanine 95–isoleucine 115, histidine 124–phenylalanine 144, phenylalanine 151–leucine 171, methionine 191–methionine 211, glutamate 213–leucine 233, and valine 237–isoleucine 257.

It belongs to the ATPase A chain family. As to quaternary structure, F-type ATPases have 2 components, CF(1) - the catalytic core - and CF(0) - the membrane proton channel. CF(1) has five subunits: alpha(3), beta(3), gamma(1), delta(1), epsilon(1). CF(0) has three main subunits: a, b and c.

The protein resides in the mitochondrion inner membrane. Functionally, mitochondrial membrane ATP synthase (F(1)F(0) ATP synthase or Complex V) produces ATP from ADP in the presence of a proton gradient across the membrane which is generated by electron transport complexes of the respiratory chain. F-type ATPases consist of two structural domains, F(1) - containing the extramembraneous catalytic core and F(0) - containing the membrane proton channel, linked together by a central stalk and a peripheral stalk. During catalysis, ATP synthesis in the catalytic domain of F(1) is coupled via a rotary mechanism of the central stalk subunits to proton translocation. Key component of the proton channel; it may play a direct role in the translocation of protons across the membrane. In Brassica napus (Rape), this protein is ATP synthase subunit a (ATP6).